The sequence spans 545 residues: Glucose-6-phosphate isomerase (545 aa).

The active-site Proton donor is the Glu351. Active-site residues include His382 and Lys510.

The protein belongs to the GPI family.

It localises to the cytoplasm. The catalysed reaction is alpha-D-glucose 6-phosphate = beta-D-fructose 6-phosphate. It functions in the pathway carbohydrate biosynthesis; gluconeogenesis. It participates in carbohydrate degradation; glycolysis; D-glyceraldehyde 3-phosphate and glycerone phosphate from D-glucose: step 2/4. Catalyzes the reversible isomerization of glucose-6-phosphate to fructose-6-phosphate. The sequence is that of Glucose-6-phosphate isomerase from Helicobacter pylori (strain ATCC 700392 / 26695) (Campylobacter pylori).